The chain runs to 310 residues: Ribosomal protein uL3 glutamine methyltransferase (310 aa).

The protein belongs to the protein N5-glutamine methyltransferase family. PrmB subfamily.

It catalyses the reaction L-glutaminyl-[ribosomal protein uL3] + S-adenosyl-L-methionine = N(5)-methyl-L-glutaminyl-[ribosomal protein uL3] + S-adenosyl-L-homocysteine + H(+). Functionally, methylates large ribosomal subunit protein uL3 on a specific glutamine residue. This chain is Ribosomal protein uL3 glutamine methyltransferase, found in Yersinia pestis.